The chain runs to 290 residues: Probable branched-chain-amino-acid aminotransferase (290 aa).

An N6-(pyridoxal phosphate)lysine modification is found at Lys-155.

Belongs to the class-IV pyridoxal-phosphate-dependent aminotransferase family. Pyridoxal 5'-phosphate is required as a cofactor.

The catalysed reaction is L-leucine + 2-oxoglutarate = 4-methyl-2-oxopentanoate + L-glutamate. The enzyme catalyses L-isoleucine + 2-oxoglutarate = (S)-3-methyl-2-oxopentanoate + L-glutamate. It catalyses the reaction L-valine + 2-oxoglutarate = 3-methyl-2-oxobutanoate + L-glutamate. It participates in amino-acid biosynthesis; L-isoleucine biosynthesis; L-isoleucine from 2-oxobutanoate: step 4/4. It functions in the pathway amino-acid biosynthesis; L-leucine biosynthesis; L-leucine from 3-methyl-2-oxobutanoate: step 4/4. Its pathway is amino-acid biosynthesis; L-valine biosynthesis; L-valine from pyruvate: step 4/4. In terms of biological role, acts on leucine, isoleucine and valine. The polypeptide is Probable branched-chain-amino-acid aminotransferase (ilvE) (Rickettsia felis (strain ATCC VR-1525 / URRWXCal2) (Rickettsia azadi)).